A 239-amino-acid polypeptide reads, in one-letter code: MINNVISPEFDENGRPMRRIRSFVRRQGRLTNGQQLALDNYWPVMGVEYQTEPVDFNALFGRDAPVVLEIGFGMGASLVTMAAQHPEQNFLGIEVHLPGVGACLASAQDVEISNLRVMCHDALEVLMKMIPDSSLSMVQLFFPDPWHKVRHNKRRIVQAPFVELVQSKLKVGGVFHMATDWEPYARHMLKVMTSVAGYRNLSDNNEYVVRPESRPLTKFEARGQRLGHGVWDLMFERIK.

Residues glutamate 69, glutamate 94, aspartate 121, and aspartate 144 each coordinate S-adenosyl-L-methionine. The active site involves aspartate 144. Lysine 148 contributes to the substrate binding site. The interval 150–155 (RHNKRR) is interaction with RNA. Residues aspartate 180 and 217 to 220 (TKFE) each bind substrate.

Belongs to the class I-like SAM-binding methyltransferase superfamily. TrmB family. Monomer.

It carries out the reaction guanosine(46) in tRNA + S-adenosyl-L-methionine = N(7)-methylguanosine(46) in tRNA + S-adenosyl-L-homocysteine. It functions in the pathway tRNA modification; N(7)-methylguanine-tRNA biosynthesis. Catalyzes the formation of N(7)-methylguanine at position 46 (m7G46) in tRNA. The polypeptide is tRNA (guanine-N(7)-)-methyltransferase (Pectobacterium atrosepticum (strain SCRI 1043 / ATCC BAA-672) (Erwinia carotovora subsp. atroseptica)).